Here is a 1643-residue protein sequence, read N- to C-terminus: DNA-directed RNA polymerase subunit beta' (1643 aa).

The Zn(2+) site is built by cysteine 64, cysteine 66, cysteine 79, and cysteine 82. Mg(2+) is bound by residues aspartate 684, aspartate 686, and aspartate 688. 4 residues coordinate Zn(2+): cysteine 1046, cysteine 1239, cysteine 1246, and cysteine 1249.

It belongs to the RNA polymerase beta' chain family. As to quaternary structure, the RNAP catalytic core consists of 2 alpha, 1 beta, 1 beta' and 1 omega subunit. When a sigma factor is associated with the core the holoenzyme is formed, which can initiate transcription. The cofactor is Mg(2+). Zn(2+) is required as a cofactor.

The enzyme catalyses RNA(n) + a ribonucleoside 5'-triphosphate = RNA(n+1) + diphosphate. In terms of biological role, DNA-dependent RNA polymerase catalyzes the transcription of DNA into RNA using the four ribonucleoside triphosphates as substrates. This is DNA-directed RNA polymerase subunit beta' from Petrotoga mobilis (strain DSM 10674 / SJ95).